We begin with the raw amino-acid sequence, 1241 residues long: Sterol 3-beta-glucosyltransferase (1241 aa).

A compositionally biased stretch (acidic residues) spans 1-11; the sequence is MSGIESTEEPC. Disordered regions lie at residues 1-97 and 124-189; these read MSGI…KPSI and DQQV…TLRK. Residues 25–34 show a composition bias toward basic and acidic residues; sequence PEERQTRKDS. Acidic residues predominate over residues 136-155; the sequence is ESEDQQADESSDEQEDDDQD. Residues 220 to 267 enclose the GRAM 1 domain; sequence NKLKRTFDISDTDVFISDYPCWLMGDVLLQGHLYITKHHILFFAFLPK. One can recognise a PH domain in the interval 271 to 373; it reads SISKSGALTT…WVSSLKKHIF (103 aa). The interval 499 to 556 is disordered; the sequence is DDFSQEQESAESSKPVSDDEIVSADDNQELEEKQPQDNLANAEKENHDKVSRANSRRT. Positions 516–527 are enriched in acidic residues; sequence DDEIVSADDNQE. Over residues 540 to 549 the composition is skewed to basic and acidic residues; sequence AEKENHDKVS. In terms of domain architecture, GRAM 2 spans 609-675; the sequence is ERFRKHFSLT…SDIENVNKEK (67 aa). A disordered region spans residues 720–741; sequence KGSTDSSPPNASEGSSDESCNL. Residues 723–741 show a composition bias toward polar residues; that stretch reads TDSSPPNASEGSSDESCNL. Residues Ser-797, Arg-798, Asp-800, Asn-1071, Val-1098, His-1100, His-1113, Ser-1116, Gly-1117, Thr-1118, Asp-1137, and Gln-1138 each contribute to the UDP-alpha-D-glucose site.

This sequence belongs to the glycosyltransferase 28 family.

The protein localises to the cytoplasm. It localises to the preautophagosomal structure membrane. It catalyses the reaction a sterol + UDP-alpha-D-glucose = a sterol 3-beta-D-glucoside + UDP + H(+). The catalysed reaction is ergosterol + UDP-alpha-D-glucose = ergosteryl 3-beta-D-glucoside + UDP + H(+). Its function is as follows. Sterol glycosyltransferase responsible for the glycosylation of ergosterol to form ergosterol-glucoside. Mediates autophagic degradation of peroxisomes (pexophagy). This Pichia angusta (Yeast) protein is Sterol 3-beta-glucosyltransferase.